A 409-amino-acid polypeptide reads, in one-letter code: Arginine biosynthesis bifunctional protein ArgJ (409 aa).

Substrate-binding residues include Thr-156, Lys-182, Thr-193, Glu-280, Asn-404, and Ser-409. The active-site Nucleophile is Thr-193.

It belongs to the ArgJ family. In terms of assembly, heterotetramer of two alpha and two beta chains.

The protein resides in the cytoplasm. The enzyme catalyses N(2)-acetyl-L-ornithine + L-glutamate = N-acetyl-L-glutamate + L-ornithine. It catalyses the reaction L-glutamate + acetyl-CoA = N-acetyl-L-glutamate + CoA + H(+). It functions in the pathway amino-acid biosynthesis; L-arginine biosynthesis; L-ornithine and N-acetyl-L-glutamate from L-glutamate and N(2)-acetyl-L-ornithine (cyclic): step 1/1. The protein operates within amino-acid biosynthesis; L-arginine biosynthesis; N(2)-acetyl-L-ornithine from L-glutamate: step 1/4. Catalyzes two activities which are involved in the cyclic version of arginine biosynthesis: the synthesis of N-acetylglutamate from glutamate and acetyl-CoA as the acetyl donor, and of ornithine by transacetylation between N(2)-acetylornithine and glutamate. In Nitrosomonas europaea (strain ATCC 19718 / CIP 103999 / KCTC 2705 / NBRC 14298), this protein is Arginine biosynthesis bifunctional protein ArgJ.